The following is a 1595-amino-acid chain: Collagen-like protein 2 (1595 aa).

2 N-linked (GlcNAc...) asparagine; by host glycosylation sites follow: Asn-87 and Asn-134. Collagen-like domains lie at 97 to 155 (LRGE…NGDV), 175 to 233 (QVGL…KGEG), 236 to 295 (GSKG…KGDI), and 299 to 358 (GIKG…KGMK). Positions 181 to 190 (SQGDQGYKGD) are enriched in low complexity. Disordered regions lie at residues 181–577 (SQGD…SPDL) and 604–1326 (TDIK…GIKG). Basic and acidic residues-rich tracts occupy residues 191–200 (QGSKGDKGQK), 209–448 (KGDK…KGTK), 456–466 (YKGDIGDKGIK), 474–501 (DKGD…DKGY), 510–561 (DNGE…DKGE), 606–615 (IKGEKGDKGE), 622–702 (KGDK…DKGD), 718–825 (KGDK…DKGI), 832–883 (KGDK…KGFK), 895–1041 (KGDK…DKGI), 1048–1098 (KGNK…DQGT), 1107–1151 (KGDK…KGIK), 1159–1250 (NKGD…KGDQ), and 1265–1300 (KGDK…DQGI). 3 N-linked (GlcNAc...) asparagine; by host glycosylation sites follow: Asn-274, Asn-280, and Asn-286. Residues Asn-373, Asn-382, Asn-400, and Asn-409 are each glycosylated (N-linked (GlcNAc...) asparagine; by host). Collagen-like domains follow at residues 380 to 559 (GDNG…KGDK), 608 to 907 (GEKG…KGEN), 920 to 1039 (GDKG…KGDK), 1043 to 1102 (GTNG…KGET), and 1128 to 1307 (GDQG…SGAS). N-linked (GlcNAc...) asparagine; by host glycans are attached at residues Asn-1345, Asn-1420, and Asn-1545. The disordered stretch occupies residues 1538–1585 (SAFDKGGNGSIRFNPPSSGTKGSGGGGSVQGGGGTIPNDGYPGGNGGP). Gly residues predominate over residues 1558–1585 (KGSGGGGSVQGGGGTIPNDGYPGGNGGP).

Post-translationally, may be hydroxylated on lysine by the viral-encoded procollagen-lysine,2-oxoglutarate 5-dioxygenase.

The protein resides in the virion. Functionally, may participate in the formation of a layer of cross-linked glycosylated fibrils at the viral surface thus giving it a hairy-like appearance. The sequence is that of Collagen-like protein 2 from Acanthamoeba polyphaga (Amoeba).